Here is a 429-residue protein sequence, read N- to C-terminus: Z-DNA-binding protein 1 (429 aa).

Z-binding domains lie at 8 to 70 and 103 to 166; these read PGRE…CLGG and PQFS…TIYR. The tract at residues 68–107 is disordered; sequence LGGTDPEGEGPAELALSSPAERPQQHAATIPETPGPQFSQ. 2 short sequence motifs (RIP homotypic interaction motif (RHIM)) span residues 195–219 and 253–277; these read NSWI…RQTV and DIHM…LHGV. Disordered stretches follow at residues 277-299 and 339-429; these read VPSE…AAGP and KMSI…GGGI. Gly residues predominate over residues 347 to 358; sequence AGPGGVAGSGEG. A compositionally biased stretch (basic and acidic residues) spans 407-420; that stretch reads KAAEGSHYVDEASH.

Homodimer. Interacts (via RIP homotypic interaction motif) with RIPK3; leading to RIPK3 activation and necroptosis; interaction is enhanced by CASP6. Interacts (via RIP homotypic interaction motif) with RIPK1. Component of the AIM2 PANoptosome complex, a multiprotein complex that drives inflammatory cell death (PANoptosis). As to quaternary structure, (Microbial infection) Interacts (via RIP homotypic interaction motif/RHIM) with herpes simplex virus 1/HHV-1 protein RIR1/ICP6 (via RHIM); this interaction may induce heteromeric amyloid assemblies and prevent necroptosis activation. Interacts with human herpes simplex virus 1/HHV-1 protein ICP0. Phosphorylated. In terms of tissue distribution, highly expressed in lymphatic tissues including lymph node, leukocytes, tonsil, bone marrow and spleen. Expressed to a lesser extent in thymus, lung and liver.

The protein localises to the cytoplasm. It is found in the nucleus. ZBP1-dependent necroptosis is normally inhibited by RIPK1: RIPK1 inhibits the ZBP1-induced activation of RIPK3 via FADD-mediated recruitment of CASP8, which cleaves RIPK1 and limits TNF-induced necroptosis. Key innate sensor that recognizes and binds Z-RNA structures, which are produced by a number of viruses, such as herpesvirus, orthomyxovirus or flavivirus, and triggers different forms of cell death. ZBP1 acts as an essential mediator of pyroptosis, necroptosis and apoptosis (PANoptosis), an integral part of host defense against pathogens, by activating RIPK3, caspase-8 (CASP8), and the NLRP3 inflammasome. Key activator of necroptosis, a programmed cell death process in response to death-inducing TNF-alpha family members, via its ability to bind Z-RNA: once activated upon Z-RNA-binding, ZBP1 interacts and stimulates RIPK3 kinase, which phosphorylates and activates MLKL, triggering execution of programmed necrosis. In addition to TNF-induced necroptosis, necroptosis can also take place in the nucleus in response to orthomyxoviruses infection: ZBP1 recognizes and binds Z-RNA structures that are produced in infected nuclei by orthomyxoviruses, such as the influenza A virus (IAV), leading to ZBP1 activation, RIPK3 stimulation and subsequent MLKL phosphorylation, triggering disruption of the nuclear envelope and leakage of cellular DNA into the cytosol. ZBP1-dependent cell death in response to IAV infection promotes interleukin-1 alpha (IL1A) induction in an NLRP3-inflammasome-independent manner: IL1A expression is required for the optimal interleukin-1 beta (IL1B) production, and together, these cytokines promote infiltration of inflammatory neutrophils to the lung, leading to the formation of neutrophil extracellular traps. In addition to its direct role in driving necroptosis via its ability to sense Z-RNAs, also involved in PANoptosis triggered in response to bacterial infection: component of the AIM2 PANoptosome complex, a multiprotein complex that triggers PANoptosis. Also acts as the apical sensor of fungal infection responsible for activating PANoptosis. Involved in CASP8-mediated cell death via its interaction with RIPK1 but independently of its ability to sense Z-RNAs. In some cell types, also able to restrict viral replication by promoting cell death-independent responses. In response to Zika virus infection in neurons, promotes a cell death-independent pathway that restricts viral replication: together with RIPK3, promotes a death-independent transcriptional program that modifies the cellular metabolism via up-regulation expression of the enzyme ACOD1/IRG1 and production of the metabolite itaconate. Itaconate inhibits the activity of succinate dehydrogenase, generating a metabolic state in neurons that suppresses replication of viral genomes. Functionally, (Microbial infection) In case of herpes simplex virus 1/HHV-1 infection, forms hetero-amyloid structures with HHV-1 protein RIR1/ICP6 which may inhibit ZBP1-mediated necroptosis, thereby preventing host cell death pathway and allowing viral evasion. In Homo sapiens (Human), this protein is Z-DNA-binding protein 1.